The primary structure comprises 405 residues: Tryptophan synthase beta chain (405 aa).

Lys96 carries the N6-(pyridoxal phosphate)lysine modification.

This sequence belongs to the TrpB family. In terms of assembly, tetramer of two alpha and two beta chains. The cofactor is pyridoxal 5'-phosphate.

It carries out the reaction (1S,2R)-1-C-(indol-3-yl)glycerol 3-phosphate + L-serine = D-glyceraldehyde 3-phosphate + L-tryptophan + H2O. It participates in amino-acid biosynthesis; L-tryptophan biosynthesis; L-tryptophan from chorismate: step 5/5. Functionally, the beta subunit is responsible for the synthesis of L-tryptophan from indole and L-serine. The sequence is that of Tryptophan synthase beta chain from Clostridium botulinum (strain Alaska E43 / Type E3).